A 261-amino-acid polypeptide reads, in one-letter code: Protein STAY-GREEN, chloroplastic (261 aa).

The transit peptide at 1–54 (MDTLTSAPLLTTKFKPSFSPQQKPCFPHRRRFENGKKNQSIVPVARLFGPAIFE) directs the protein to the chloroplast.

It belongs to the staygreen family.

It localises to the plastid. The protein resides in the chloroplast. Its function is as follows. Probably involved in the disassembling mechanism of the intact light-harvesting complex of photosystem II (LHCII) in the thylakoid membranes. Required for the chlorophyll breakdown pathway. Acts independent and upstream of pheophorbide a oxygenase (PAO). This chain is Protein STAY-GREEN, chloroplastic (SGR), found in Pisum sativum (Garden pea).